We begin with the raw amino-acid sequence, 121 residues long: Large ribosomal subunit protein uL18 (121 aa).

It belongs to the universal ribosomal protein uL18 family. In terms of assembly, part of the 50S ribosomal subunit; part of the 5S rRNA/L5/L18/L25 subcomplex. Contacts the 5S and 23S rRNAs.

In terms of biological role, this is one of the proteins that bind and probably mediate the attachment of the 5S RNA into the large ribosomal subunit, where it forms part of the central protuberance. This is Large ribosomal subunit protein uL18 from Burkholderia mallei (strain NCTC 10247).